A 409-amino-acid polypeptide reads, in one-letter code: NADH-ubiquinone oxidoreductase chain 4 (409 aa).

Transmembrane regions (helical) follow at residues 10-30, 44-64, 76-96, 98-118, 120-140, 160-180, 194-214, 221-241, 245-265, 271-291, 305-325, 353-373, and 389-409; these read LWLFKPIYFLLFTVMFSFLIF, SYSFILLIVMSLFILGIIVIS, ILVFICIIFFIPSNMMMLYMF, ELSMFPILVMILGYGSQIEKI, SSYYLMFYAAFCSFPFLFVYF, FFILSLSFMMKFPIYFLHLWL, LLAGLLLKLGTAGFLRILGSL, VWILIAFLGMILGSFCCVFQS, ALAAYSSVTHMSFLLLSLVFI, ISSVMLMLAHGYTSTLMFYLI, FMSSFFSSSMIMGILFSVVFL, MFVMIFIYFVVSFYYSLFLIT, and VGFSAPLVLMMYNVFWLSVFY.

Belongs to the complex I subunit 4 family.

Its subcellular location is the mitochondrion membrane. The catalysed reaction is a ubiquinone + NADH + 5 H(+)(in) = a ubiquinol + NAD(+) + 4 H(+)(out). Core subunit of the mitochondrial membrane respiratory chain NADH dehydrogenase (Complex I) that is believed to belong to the minimal assembly required for catalysis. Complex I functions in the transfer of electrons from NADH to the respiratory chain. The immediate electron acceptor for the enzyme is believed to be ubiquinone. The polypeptide is NADH-ubiquinone oxidoreductase chain 4 (Caenorhabditis elegans).